A 252-amino-acid chain; its full sequence is 7-cyano-7-deazaguanine synthase (252 aa).

An ATP-binding site is contributed by 22-32 (FSGGQDSTTCL). Zn(2+) is bound by residues C215, C230, C233, and C236.

This sequence belongs to the QueC family. Zn(2+) is required as a cofactor.

It catalyses the reaction 7-carboxy-7-deazaguanine + NH4(+) + ATP = 7-cyano-7-deazaguanine + ADP + phosphate + H2O + H(+). Its pathway is purine metabolism; 7-cyano-7-deazaguanine biosynthesis. In terms of biological role, catalyzes the ATP-dependent conversion of 7-carboxy-7-deazaguanine (CDG) to 7-cyano-7-deazaguanine (preQ(0)). The chain is 7-cyano-7-deazaguanine synthase from Granulibacter bethesdensis (strain ATCC BAA-1260 / CGDNIH1).